A 291-amino-acid polypeptide reads, in one-letter code: Homoserine kinase (291 aa).

80–90 (RPSSGLGSSAA) is a binding site for ATP.

It belongs to the GHMP kinase family. Homoserine kinase subfamily.

It localises to the cytoplasm. The enzyme catalyses L-homoserine + ATP = O-phospho-L-homoserine + ADP + H(+). It participates in amino-acid biosynthesis; L-threonine biosynthesis; L-threonine from L-aspartate: step 4/5. Functionally, catalyzes the ATP-dependent phosphorylation of L-homoserine to L-homoserine phosphate. The chain is Homoserine kinase from Haloquadratum walsbyi (strain DSM 16790 / HBSQ001).